The following is a 351-amino-acid chain: Uroporphyrinogen decarboxylase (351 aa).

Substrate contacts are provided by residues 26-30 (RQAGR), D75, Y151, S206, and H321.

Belongs to the uroporphyrinogen decarboxylase family. In terms of assembly, homodimer.

It localises to the cytoplasm. The enzyme catalyses uroporphyrinogen III + 4 H(+) = coproporphyrinogen III + 4 CO2. Its pathway is porphyrin-containing compound metabolism; protoporphyrin-IX biosynthesis; coproporphyrinogen-III from 5-aminolevulinate: step 4/4. In terms of biological role, catalyzes the decarboxylation of four acetate groups of uroporphyrinogen-III to yield coproporphyrinogen-III. This chain is Uroporphyrinogen decarboxylase, found in Koribacter versatilis (strain Ellin345).